The primary structure comprises 293 residues: MAVAQQAWSPGADPAPSAAPVSPGWRGALRLDFARRGERTALVRRRHQGPLVVQRTFHPEGAPCHAYLLHPPGGLVGGDELDLSVEVGEGAHALMTTPGAAKFYRSSGDWSIQRQVFRLAPGATFEWLPMETILHGGSRSRLINRFELAEGARLIAWEMVALGRPGSGDHFPRGVLDQRLAVNCEQMPLLRERLSLNADDPLRTAPWGLQGQAVFATLLASPAPDGLEHDLRDALQVPPGVRMGATRCPEGLLAVRVLGPGVEPVRKTLEQAWRTIREPVVGLPPCPPRIWST.

The tract at residues 1–22 (MAVAQQAWSPGADPAPSAAPVS) is disordered. Low complexity predominate over residues 7–22 (AWSPGADPAPSAAPVS).

The protein belongs to the UreD family. As to quaternary structure, ureD, UreF and UreG form a complex that acts as a GTP-hydrolysis-dependent molecular chaperone, activating the urease apoprotein by helping to assemble the nickel containing metallocenter of UreC. The UreE protein probably delivers the nickel.

Its subcellular location is the cytoplasm. In terms of biological role, required for maturation of urease via the functional incorporation of the urease nickel metallocenter. The protein is Urease accessory protein UreD of Alkalilimnicola ehrlichii (strain ATCC BAA-1101 / DSM 17681 / MLHE-1).